The primary structure comprises 121 residues: Ragulator complex protein LAMTOR4 homolog (121 aa).

The interval 91 to 121 (TQNGATTSSSSSTSYNDAAEGNNISSSTVLA) is disordered. The segment covering 112 to 121 (NNISSSTVLA) has biased composition (polar residues).

It belongs to the LAMTOR4 family. In terms of assembly, part of the Ragulator complex.

The protein localises to the lysosome. Regulator of the TOR pathway, a signaling cascade that promotes cell growth in response to growth factors, energy levels, and amino acids. As part of the Ragulator complex, may activate the TOR signaling cascade in response to amino acids. The polypeptide is Ragulator complex protein LAMTOR4 homolog (Drosophila pseudoobscura pseudoobscura (Fruit fly)).